The following is a 434-amino-acid chain: MSQYASSSSWTSFLKSIASFNGDLSSLSAPPFILSPISLTEFSQYWAEHPELFLEPSFINDDNYKEHCLIDPEVESPELARMLAVTKWFISTLKSQYCSRNESLGSEKKPLNPFLGELFVGKWENKEHPEFGETVLLSEQVSHHPPVTAFSIFNDKNKVKLQGYNQIKASFTKSLMLTVKQFGHTMLDIKDESYLVTPPPLHIEGILVASPFVELEGKSYIQSSTGLLCVIEFSGRGYFSGKKNSFKARIYKDSKDSKDKEKALYTISGQWSGSSKIIKANKKEESRLFYDAARIPAEHLNVKPLEEQHPLESRKAWYDVAGAIKLGDFNLIAKTKTELEETQRELRKEEEAKGISWQRRWFKDFDYSVTPEEGALVPEKDDTFLKLASALNLSTKNAPSGTLVGDKEDRKEDLSSIHWRFQRELWDEEKEIVL.

The interval 7-29 (SSSWTSFLKSIASFNGDLSSLSA) is ALPS motif. Residues 16–366 (SIASFNGDLS…WQRRWFKDFD (351 aa)) form an OSBP-related domain (ORD) region. 24 to 29 (LSSLSA) provides a ligand contact to a 1,2-diacyl-sn-glycero-3-phospho-(1D-myo-inositol 4-phosphate). Glutamine 96 serves as a coordination point for 20-hydroxycholesterol. Residue glutamine 96 participates in 25-hydroxycholesterol binding. Positions 96 and 100 each coordinate 7beta-hydroxycholesterol. Glutamine 96 is a cholesterol binding site. Residue glutamine 96 coordinates ergosterol. Residues 109–112 (KPLN), 143–144 (HH), lysine 336, glutamate 340, and arginine 344 contribute to the a 1,2-diacyl-sn-glycero-3-phospho-(1D-myo-inositol 4-phosphate) site. Residue threonine 370 is modified to Phosphothreonine. A Phosphoserine modification is found at serine 389.

Belongs to the OSBP family.

It is found in the cytoplasm. Its subcellular location is the golgi apparatus membrane. Functionally, lipid transport protein (LTP) involved in non-vesicular transfer of lipids between membranes. Functions in phosphoinositide-coupled directional transport of various lipids by carrying the lipid molecule in a hydrophobic pocket and transferring it between membranes through the cytosol. Involved in maintenance of intracellular sterol distribution and homeostasis. Involved in lipid countertransport between the Golgi complex and membranes of the endoplasmic reticulum. Specifically exchanges sterol with phosphatidylinositol 4-phosphate (PI4P), delivering sterol to the Golgi in exchange for PI4P, which is delivered to the ER-localized PI4P phosphatase SAC1 for degradation. Thus, by maintaining a PI4P gradient at the ER/Golgi interface, SAC1 may drive PS transport. Displays a similar affinity for PI4P and sterols. Binds sterol and PI4P in a mutually exclusive manner. Involved in ergosterol transport from the plasma membrane (PM) to the ER. Mediates sterol transport from the ER to mitochondria. Involved in the negative regulation of Golgi-derived transport vesicle biogenesis. Plays a role in the positive regulation of vesicular transport of ceramide from the ER to the Golgi, negatively regulating COPII-mediated ER export of cargos. This is Oxysterol-binding protein homolog 4 from Saccharomyces cerevisiae (strain ATCC 204508 / S288c) (Baker's yeast).